A 312-amino-acid polypeptide reads, in one-letter code: UDP-N-acetylenolpyruvoylglucosamine reductase (312 aa).

Residues 30–202 (RVGGPAQWLA…VAAQFQLEPG (173 aa)) enclose the FAD-binding PCMH-type domain. R181 is a catalytic residue. S232 (proton donor) is an active-site residue. E302 is an active-site residue.

Belongs to the MurB family. Requires FAD as cofactor.

It localises to the cytoplasm. It carries out the reaction UDP-N-acetyl-alpha-D-muramate + NADP(+) = UDP-N-acetyl-3-O-(1-carboxyvinyl)-alpha-D-glucosamine + NADPH + H(+). Its pathway is cell wall biogenesis; peptidoglycan biosynthesis. Cell wall formation. This Synechococcus sp. (strain CC9311) protein is UDP-N-acetylenolpyruvoylglucosamine reductase.